Reading from the N-terminus, the 1345-residue chain is Protein dispatched homolog 2 (1345 aa).

The disordered stretch occupies residues 1 to 28 (MAPEASPERSCSLHTCPLEDPTGAPVPP). A helical transmembrane segment spans residues 125-145 (VAVIVGCLAFIFLCTLAGLLG). N-linked (GlcNAc...) asparagine glycans are attached at residues Asn304 and Asn420. Positions 429–598 (LGLKPRLLKY…LLWLPATVVL (170 aa)) constitute an SSD domain. 6 helical membrane passes run 440-460 (LAEDTMYPLIALVVIFFGMSL), 465-485 (LFITFMSLLGVLGSLMVAYFL), 497-517 (FVNLAALLLLSGVCVNYTLIF), 544-564 (FGYLLLVSGLTTSAAFYGSYL), 572-592 (CFALFMGTAVLVHMGLTLLWL), and 659-679 (YIWICWFAALAAGGAYIGGVS). The N-linked (GlcNAc...) asparagine glycan is linked to Asn776. 5 helical membrane passes run 919–939 (PAVVLGLALALAFATLLLSTW), 945–965 (LFSVAAVAGTVLLTVGLLVLL), 974–994 (ALFLSASVGLSVDLTINYCIS), 1019–1039 (AMTTGVLFASGVIMLPSTILL), and 1043–1063 (LGIIVMMVKFLGCGFASFFFQ). 2 disordered regions span residues 1251-1271 (VRVPDSVGTSPEVMNGTGHPI) and 1295-1345 (PNMP…GYSS). Positions 1297 to 1306 (MPNSHHSSLS) are enriched in polar residues. At Arg1310 the chain carries Omega-N-methylarginine.

It belongs to the dispatched family.

The protein localises to the membrane. The sequence is that of Protein dispatched homolog 2 (Disp2) from Mus musculus (Mouse).